Reading from the N-terminus, the 231-residue chain is LexA repressor (231 aa).

The H-T-H motif DNA-binding region spans 26-46; the sequence is FDEMKDALDLRSKSGIHRLIT. Active-site for autocatalytic cleavage activity residues include Ser152 and Lys190.

The protein belongs to the peptidase S24 family. Homodimer.

It carries out the reaction Hydrolysis of Ala-|-Gly bond in repressor LexA.. Functionally, represses a number of genes involved in the response to DNA damage (SOS response), including recA and lexA. In the presence of single-stranded DNA, RecA interacts with LexA causing an autocatalytic cleavage which disrupts the DNA-binding part of LexA, leading to derepression of the SOS regulon and eventually DNA repair. The sequence is that of LexA repressor from Bradyrhizobium diazoefficiens (strain JCM 10833 / BCRC 13528 / IAM 13628 / NBRC 14792 / USDA 110).